A 965-amino-acid chain; its full sequence is MSKPQRLSAAQTAGARINRDEALTLTVDGQQLSAFRGDTVASAMLANGLRSCGNSMYLDRPRGIFSAGVEEPNALITVGARHQADINESMLPATTVSVTDGLNATLLSGLGVLDPSEDPAYYDHVHVHTDVLVVGAGPAGLAAAREASRSGARVMLLDERPEAGGTLREASGEQIDGIDAAQWIDAVTEELAAAEETTHLQRTTVFGSYDANYILAAQRRTVHLDGPSGQGVSRERIWHIRAKQVVLATAAHERPIVFENNDRPGIMLAGSVRSYLNRFGVRAGSKIAVATTNDSVYPLVSELAASGGVVAVIDARQNISAAAAQAVTDGVTVLTGSVVANTEADASGELSAVLVATLDEQRNLGEAQRFEADVLAVSGGFNPVVHLHSQRQGKLNWDTSIHAFVPADAVANQHLAGALTGLLDTASALSTGAATGAAAASAAGFEKIAEVPQALAVPAGETRPVWLVPSLSGDDAVHYKFHFVDLQRDQTVADVLRATGAGMQSVEHIKRYTSISTANDQGKTSGVAAIGVIAAVLGIENPAQIGTTTFRAPYTPVSFAALAGRTRGELLDPARLTAMHPWHLAHGAKFEDVGQWKRPWYYPQDGESMDEAVYRECKAVRDSVGMLDASTLGKIEIRGKDAAEFLNRMYTNGYTKLKVGMGRYGVMCKADGMIFDDGVTLRLAEDRFLMHTTTGGAADVLDWLEEWLQTEWPELDVTCTSVTEQLATVAVVGPRSRDVIAKLASSLDVSNDAFKFMAFQDVTLDSGIEARISRISFSGELAFEIAIPAWHGLQVWEDVYAAGQEFNITPYGTETMHVLRAEKGFIIVGQDTDGTVTPQDAGMEWVVSKLKDFVGKRSFSREDNVREDRKHLVSVLPVDSSLRLAEGAALVAADAVASEGVTPMEGWVTHAYNSPALGRTFGLALIKNGRNRIGEVLKTPVDGQLVDVQVSDLVLFDPEGSRRDG.

Positions 139, 158, 159, 160, 166, 205, 418, 423, and 425 each coordinate NAD(+). Thr692 and Glu784 together coordinate (6R)-5,10-methylene-5,6,7,8-tetrahydrofolate.

The protein belongs to the GcvT family. As to quaternary structure, heterotetramer composed of subunits alpha (SoxA), beta (SoxB), gamma (SoxG) and delta (SoxD). The cofactor is NAD(+).

The protein localises to the cytoplasm. The catalysed reaction is sarcosine + (6S)-5,6,7,8-tetrahydrofolate + O2 = (6R)-5,10-methylene-5,6,7,8-tetrahydrofolate + glycine + H2O2. It catalyses the reaction sarcosine + O2 + H2O = formaldehyde + glycine + H2O2. Its activity is regulated as follows. Inhibited by Zn(2+), Cu(2+), Cd(2+), Hg(2+), Ag(+), p-chloromercuribenzoate (p-CMB), iodoacetamide, N-ethylmaleimide, CN(-), o-phenanthroline and sodium lauryl sulfate. Its function is as follows. In the presence of tetrahydrofolate, catalyzes the oxidative demethylation of sarcosine to yield glycine, 5,10-methylenetetrahydrofolate and hydrogen peroxide. In the absence of tetrahydrofolate, catalyzes the oxidative demethylation of sarcosine to yield glycine, formaldehyde and hydrogen peroxide. Can also use N-methyl-L-alanine and N-ethyl-L-glycine. Is very specific for oxygen as an acceptor. This is Sarcosine oxidase subunit alpha from Corynebacterium sp. (strain U-96).